A 507-amino-acid chain; its full sequence is MEELQGYLEIDRSRQQHFLYPLLFQEYIYALAHDHGLNGSIFYEPMENFGYDNKSSSLIVKRLITRMHQQNHVILSVNDSNESIFVGHNKNFYFQMVSEGFAVIMEIPFSLRLVSSLEEKEIAKSHNSRSIHSIFPFFEDKLSHLNHVSDILIPHPIHLEILVQTLHCWIQDAPSLHLLRFFLHEYRNSNSLITPKKSISLFSKENQRFFLLLYNSHVYECESVLVFLRKQSSHLRSTSSGTFLERTHFYGKIEHLVVVLRNDFQKTLWLFKDPFMHYVRYQGKSILASKGTHLLMKKWKSHLVHFWQCHFYLWSLPDRIHINQLYNHFLYFLGYLSSVRLNTSVVGIQMLENSFLIDTSINKFETLVPIIPLIGSVAKAKFCNVSGHPISKSVRADSSDSDIINRFGRIYRNLSHYHSGSSKKQTLYRIKYILRLSCARTLARKHKSTVRAFLKRLGSEFLEEFLTEEEQVLSLIFQRTSSPSYRSHRERIWYLDIIRINDLANHS.

It belongs to the intron maturase 2 family. MatK subfamily.

The protein resides in the plastid. It localises to the chloroplast. Usually encoded in the trnK tRNA gene intron. Probably assists in splicing its own and other chloroplast group II introns. The sequence is that of Maturase K from Magnolia figo (Banana shrub).